A 229-amino-acid polypeptide reads, in one-letter code: ATP-dependent dethiobiotin synthetase BioD (229 aa).

12–17 (GVGKTV) contributes to the ATP binding site. Thr-16 is a binding site for Mg(2+). Lys-37 is a catalytic residue. Substrate is bound at residue Thr-41. Residues Asp-53, 112–115 (EGAG), and 201–203 (PAG) contribute to the ATP site. Asp-53 and Glu-112 together coordinate Mg(2+).

This sequence belongs to the dethiobiotin synthetase family. In terms of assembly, homodimer. It depends on Mg(2+) as a cofactor.

Its subcellular location is the cytoplasm. The catalysed reaction is (7R,8S)-7,8-diammoniononanoate + CO2 + ATP = (4R,5S)-dethiobiotin + ADP + phosphate + 3 H(+). It functions in the pathway cofactor biosynthesis; biotin biosynthesis; biotin from 7,8-diaminononanoate: step 1/2. Functionally, catalyzes a mechanistically unusual reaction, the ATP-dependent insertion of CO2 between the N7 and N8 nitrogen atoms of 7,8-diaminopelargonic acid (DAPA, also called 7,8-diammoniononanoate) to form a ureido ring. The chain is ATP-dependent dethiobiotin synthetase BioD from Mycobacterium sp. (strain JLS).